The sequence spans 166 residues: Small ribosomal subunit protein uS5 (166 aa).

The S5 DRBM domain occupies 11–74 (LDDNVVAINR…EAAKKNLITV (64 aa)).

It belongs to the universal ribosomal protein uS5 family. In terms of assembly, part of the 30S ribosomal subunit. Contacts proteins S4 and S8.

Functionally, with S4 and S12 plays an important role in translational accuracy. Located at the back of the 30S subunit body where it stabilizes the conformation of the head with respect to the body. The protein is Small ribosomal subunit protein uS5 of Lactiplantibacillus plantarum (strain ATCC BAA-793 / NCIMB 8826 / WCFS1) (Lactobacillus plantarum).